A 216-amino-acid polypeptide reads, in one-letter code: DNA gyrase subunit B (216 aa).

One can recognise a Toprim domain in the interval 140-216 (SELYLVEGDS…PDKLRYHKII (77 aa)).

Belongs to the type II topoisomerase GyrB family. In terms of assembly, heterotetramer, composed of two GyrA and two GyrB chains. In the heterotetramer, GyrA contains the active site tyrosine that forms a transient covalent intermediate with DNA, while GyrB binds cofactors and catalyzes ATP hydrolysis.

Its subcellular location is the cytoplasm. The catalysed reaction is ATP-dependent breakage, passage and rejoining of double-stranded DNA.. Its function is as follows. A type II topoisomerase that negatively supercoils closed circular double-stranded (ds) DNA in an ATP-dependent manner to modulate DNA topology and maintain chromosomes in an underwound state. Negative supercoiling favors strand separation, and DNA replication, transcription, recombination and repair, all of which involve strand separation. Also able to catalyze the interconversion of other topological isomers of dsDNA rings, including catenanes and knotted rings. Type II topoisomerases break and join 2 DNA strands simultaneously in an ATP-dependent manner. The polypeptide is DNA gyrase subunit B (gyrB) (Acinetobacter sp. (strain ATCC 33308 / BD413 ErpE27)).